Reading from the N-terminus, the 337-residue chain is Tetraacyldisaccharide 4'-kinase (337 aa).

ATP is bound at residue 56–63; that stretch reads VAGGAGKT.

The protein belongs to the LpxK family.

The catalysed reaction is a lipid A disaccharide + ATP = a lipid IVA + ADP + H(+). The protein operates within glycolipid biosynthesis; lipid IV(A) biosynthesis; lipid IV(A) from (3R)-3-hydroxytetradecanoyl-[acyl-carrier-protein] and UDP-N-acetyl-alpha-D-glucosamine: step 6/6. Its function is as follows. Transfers the gamma-phosphate of ATP to the 4'-position of a tetraacyldisaccharide 1-phosphate intermediate (termed DS-1-P) to form tetraacyldisaccharide 1,4'-bis-phosphate (lipid IVA). In Rhodospirillum centenum (strain ATCC 51521 / SW), this protein is Tetraacyldisaccharide 4'-kinase.